We begin with the raw amino-acid sequence, 752 residues long: Multifunctional tryptophan biosynthesis protein (752 aa).

Positions 3–202 (FTLLIDNYDS…IQMKGGKWGG (200 aa)) constitute a Glutamine amidotransferase type-1 domain. 58–60 (GPG) serves as a coordination point for L-glutamine. Cys-86 acts as the Nucleophile; for GATase activity in catalysis. An L-glutamine-binding site is contributed by 136 to 137 (SL). Residues His-176 and Glu-178 each act as for GATase activity in the active site. The segment at 231–495 (ILNKIHAQRL…DTKAFLRSLI (265 aa)) is indole-3-glycerol phosphate synthase. Residues 509-752 (LVKICGIRST…VEAFVKAVRG (244 aa)) are N-(5'-phosphoribosyl)anthranilate isomerase.

It catalyses the reaction N-(5-phospho-beta-D-ribosyl)anthranilate = 1-(2-carboxyphenylamino)-1-deoxy-D-ribulose 5-phosphate. It carries out the reaction 1-(2-carboxyphenylamino)-1-deoxy-D-ribulose 5-phosphate + H(+) = (1S,2R)-1-C-(indol-3-yl)glycerol 3-phosphate + CO2 + H2O. The enzyme catalyses chorismate + L-glutamine = anthranilate + pyruvate + L-glutamate + H(+). It functions in the pathway amino-acid biosynthesis; L-tryptophan biosynthesis; L-tryptophan from chorismate: step 1/5. Its pathway is amino-acid biosynthesis; L-tryptophan biosynthesis; L-tryptophan from chorismate: step 3/5. It participates in amino-acid biosynthesis; L-tryptophan biosynthesis; L-tryptophan from chorismate: step 4/5. Its function is as follows. Trifunctional enzyme bearing the Gln amidotransferase (GATase) domain of anthranilate synthase, indole-glycerolphosphate synthase, and phosphoribosylanthranilate isomerase activities. The sequence is that of Multifunctional tryptophan biosynthesis protein (TRP1) from Cryptococcus neoformans var. grubii serotype A (strain H99 / ATCC 208821 / CBS 10515 / FGSC 9487) (Filobasidiella neoformans var. grubii).